The sequence spans 309 residues: Fe-S cluster assembly protein dre2 (309 aa).

Residues 1–132 form an N-terminal SAM-like domain region; it reads MTTTIVLASP…LRRPAQVEAV (132 aa). Residues 133–195 are linker; sequence PLKLSTKKSA…DALVSDEETQ (63 aa). Positions 207, 216, 219, and 221 each coordinate [2Fe-2S] cluster. Positions 207-221 are fe-S binding site A; it reads CSKPGKKKRCKNCTC. [4Fe-4S] cluster contacts are provided by Cys-265, Cys-268, Cys-276, and Cys-279. 2 short sequence motifs (cx2C motif) span residues 265–268 and 276–279; these read CGSC and CSGC. The interval 265-279 is fe-S binding site B; sequence CGSCYLGDAFRCSGC.

Belongs to the anamorsin family. As to quaternary structure, monomer. Interacts with TAH18. Interacts with MIA40. Requires [2Fe-2S] cluster as cofactor. The cofactor is [4Fe-4S] cluster.

It is found in the cytoplasm. The protein localises to the mitochondrion intermembrane space. Functionally, component of the cytosolic iron-sulfur (Fe-S) protein assembly (CIA) machinery required for the maturation of extramitochondrial Fe-S proteins. Part of an electron transfer chain functioning in an early step of cytosolic Fe-S biogenesis, facilitating the de novo assembly of a [4Fe-4S] cluster on the scaffold complex CFD1-NBP35. Electrons are transferred to DRE2 from NADPH via the FAD- and FMN-containing protein TAH18. TAH18-DRE2 are also required for the assembly of the diferric tyrosyl radical cofactor of ribonucleotide reductase (RNR), probably by providing electrons for reduction during radical cofactor maturation in the catalytic small subunit RNR2. This is Fe-S cluster assembly protein dre2 from Schizosaccharomyces japonicus (strain yFS275 / FY16936) (Fission yeast).